The primary structure comprises 631 residues: MAPPGSSAVFLLALTITASVQALTPTHYLTKQDVERLKASLDRPFTDLESAFYSIVGLSSLGVQVPDVKKACTFIKSNLDPSNVDSLFYAAQSSQVLSGCEISVSNETKELLLAAVSEDSPIAQIYHAVAALSGFGLPLASNEALGALTARLGKEETVLATVQALQTASHLSQQADLRNIVEEIEDLVARLDELGGVYLQFEEGLELTALFVAATYKLMDHVGTEPSMKEDQVIQLMNTIFSKKNFESLSEAFSVASAAAALSQNRYHVPVVVVPEGSTSDTQEQAILRLQVSNVLSQPLAQAAVKLEHAKSAATRATVLQKTPFSLVGNVFELNFKNVKLSSGYYDFSVRVEGDSRYIANTVELRVKISTEVGITNVDLSTVDKDQSIAPKTTRVTYPAKAKGTFIADSHQNFALFFQLVDVNTGAELTPHQTFVRLHNQKTGQEVVFVAEPDNKNVYKFELDTSERKIEFDSASGTYTLYLIIGDATLKNPILWNVADVVIKFPEEEAPSTVLSQSLFTPKQEIQHLFREPEKRPPTVVSNTFTALILSPLLLLFALWIRIGANVSNFTFAPSTVIFHLGHAAMLGLMYIYWTQLNMFQTLKYLAVLGTVTFLAGNRMLAQHAVKRTAH.

Residues 1–22 (MAPPGSSAVFLLALTITASVQA) form the signal peptide. The Lumenal segment spans residues 23 to 540 (LTPTHYLTKQ…REPEKRPPTV (518 aa)). N-linked (GlcNAc...) asparagine glycosylation is present at N106. K154 participates in a covalent cross-link: Glycyl lysine isopeptide (Lys-Gly) (interchain with G-Cter in ubiquitin). A helical membrane pass occupies residues 541-561 (VSNTFTALILSPLLLLFALWI). Topologically, residues 562–571 (RIGANVSNFT) are cytoplasmic. Residues 572–592 (FAPSTVIFHLGHAAMLGLMYI) form a helical membrane-spanning segment. Topologically, residues 593–596 (YWTQ) are lumenal. A helical membrane pass occupies residues 597–617 (LNMFQTLKYLAVLGTVTFLAG). Residues 618 to 631 (NRMLAQHAVKRTAH) are Cytoplasmic-facing.

This sequence belongs to the SWP1 family. In terms of assembly, component of the oligosaccharyltransferase (OST) complex. OST exists in two different complex forms which contain common core subunits RPN1, RPN2, OST48, OST4, DAD1 and TMEM258, either STT3A or STT3B as catalytic subunits, and form-specific accessory subunits. STT3A complex assembly occurs through the formation of 3 subcomplexes. Subcomplex 1 contains RPN1 and TMEM258, subcomplex 2 contains the STT3A-specific subunits STT3A, DC2/OSTC, and KCP2 as well as the core subunit OST4, and subcomplex 3 contains RPN2, DAD1, and OST48. The STT3A complex can form stable complexes with the Sec61 complex or with both the Sec61 and TRAP complexes. Interacts with DDI2. Interacts with TMEM35A/NACHO.

The protein resides in the endoplasmic reticulum. It is found in the endoplasmic reticulum membrane. Its pathway is protein modification; protein glycosylation. In terms of biological role, subunit of the oligosaccharyl transferase (OST) complex that catalyzes the initial transfer of a defined glycan (Glc(3)Man(9)GlcNAc(2) in eukaryotes) from the lipid carrier dolichol-pyrophosphate to an asparagine residue within an Asn-X-Ser/Thr consensus motif in nascent polypeptide chains, the first step in protein N-glycosylation. N-glycosylation occurs cotranslationally and the complex associates with the Sec61 complex at the channel-forming translocon complex that mediates protein translocation across the endoplasmic reticulum (ER). All subunits are required for a maximal enzyme activity. The polypeptide is Dolichyl-diphosphooligosaccharide--protein glycosyltransferase subunit 2 (Mus musculus (Mouse)).